The chain runs to 336 residues: Ketol-acid reductoisomerase (NADP(+)) 1 (336 aa).

Residues 2–181 (AKVYYEKDVT…GATRAGVLET (180 aa)) enclose the KARI N-terminal Rossmann domain. Residues 25–28 (YGSQ), R48, S52, and 82–85 (DELQ) each bind NADP(+). H107 is a catalytic residue. G133 contacts NADP(+). Residues 182–327 (TFKEETETDL…RKLREMMPFV (146 aa)) enclose the KARI C-terminal knotted domain. Positions 190, 194, 226, and 230 each coordinate Mg(2+). Residue S251 coordinates substrate.

Belongs to the ketol-acid reductoisomerase family. Mg(2+) serves as cofactor.

The catalysed reaction is (2R)-2,3-dihydroxy-3-methylbutanoate + NADP(+) = (2S)-2-acetolactate + NADPH + H(+). It carries out the reaction (2R,3R)-2,3-dihydroxy-3-methylpentanoate + NADP(+) = (S)-2-ethyl-2-hydroxy-3-oxobutanoate + NADPH + H(+). It participates in amino-acid biosynthesis; L-isoleucine biosynthesis; L-isoleucine from 2-oxobutanoate: step 2/4. Its pathway is amino-acid biosynthesis; L-valine biosynthesis; L-valine from pyruvate: step 2/4. Its function is as follows. Involved in the biosynthesis of branched-chain amino acids (BCAA). Catalyzes an alkyl-migration followed by a ketol-acid reduction of (S)-2-acetolactate (S2AL) to yield (R)-2,3-dihydroxy-isovalerate. In the isomerase reaction, S2AL is rearranged via a Mg-dependent methyl migration to produce 3-hydroxy-3-methyl-2-ketobutyrate (HMKB). In the reductase reaction, this 2-ketoacid undergoes a metal-dependent reduction by NADPH to yield (R)-2,3-dihydroxy-isovalerate. The protein is Ketol-acid reductoisomerase (NADP(+)) 1 of Bacillus cereus (strain ZK / E33L).